A 185-amino-acid chain; its full sequence is p53 apoptosis effector related to PMP-22 (185 aa).

Transmembrane regions (helical) follow at residues 13–33 (WILP…IAAQ), 74–94 (VAAL…ISLV), 105–125 (LPFI…ALII), and 143–163 (WAYG…ILFC).

The protein belongs to the TMEM47 family.

It is found in the cell junction. Its subcellular location is the desmosome. It localises to the cell membrane. The protein resides in the cytoplasm. In terms of biological role, component of intercellular desmosome junctions. Positively regulates apoptosis in the early-stage embryo in response to UV irradiation, this is partially dependent on tp53 activation. Required for the survival of cell populations in the developing notochord and skin, therefore required for normal embryogenesis beyond 30 hpf. Acts as a positive regulator of endothelial cell apoptosis in response to blood flow-derived shear stress. The polypeptide is p53 apoptosis effector related to PMP-22 (Danio rerio (Zebrafish)).